A 238-amino-acid polypeptide reads, in one-letter code: Probable 2-phosphosulfolactate phosphatase (238 aa).

Belongs to the ComB family. Mg(2+) serves as cofactor.

The enzyme catalyses (2R)-O-phospho-3-sulfolactate + H2O = (2R)-3-sulfolactate + phosphate. This chain is Probable 2-phosphosulfolactate phosphatase, found in Clostridium beijerinckii (strain ATCC 51743 / NCIMB 8052) (Clostridium acetobutylicum).